Consider the following 640-residue polypeptide: Chaperone protein DnaK (640 aa).

Thr-196 is modified (phosphothreonine; by autocatalysis). Disordered stretches follow at residues 510-530 (NDAK…ETKN) and 598-640 (AADA…DKDK).

This sequence belongs to the heat shock protein 70 family.

Acts as a chaperone. In Prosthecochloris aestuarii (strain DSM 271 / SK 413), this protein is Chaperone protein DnaK.